Here is a 527-residue protein sequence, read N- to C-terminus: MIAMIATAIIGIVAGGGLGWALHKFFRARTLRLAREEAQDILDEANEVVELRNLEERERIQEIEMELWTKVEPEMLKSEGRIEDLQEVANERKAKADAIVQEEKKKLQDREADVKVQEQALRGQEAELGKLKEAQKALNQELVQKLTERLGTSAEEFKTQLKNQMEEESRRRAARMIQETEADTKEHAESEAKRILSLVIDRFARPYCAERGIGAVNFPDAHIRKLFCDPAGNNIKAVQDACGCDIIVEEGMEMVGVAGFDPVRRELTRRTLERIFKEKKNINPDFIRKIAENQKKELFKNIKHDGDSLAKELKLEGLNAEIRQMMGSLRYRYSFTQNQYFHCGEVGWLAGLMAAELGIDIKKARRVGMLHDIGKSMDHTVEGGHAVIGADFIAARGEAPDVVHAVKAHHFDEQPSTDHAFLVIAADAVSGARPGARRSTIESYNQKVSELQDIARSFPGVTDCFVLSGGRECRVMVNGKKVDDTQAMDLSRKIAARIEEECNYPGSIKVVVVRETVVTEQTRKELA.

The chain crosses the membrane as a helical span at residues 2–22; sequence IAMIATAIIGIVAGGGLGWAL. Residues 339–432 form the HD domain; it reads QYFHCGEVGW…VIAADAVSGA (94 aa).

Belongs to the RNase Y family.

The protein resides in the cell membrane. Its function is as follows. Endoribonuclease that initiates mRNA decay. This is Ribonuclease Y 2 from Bdellovibrio bacteriovorus (strain ATCC 15356 / DSM 50701 / NCIMB 9529 / HD100).